The sequence spans 712 residues: Phosphomethylpyrimidine synthase (712 aa).

The disordered stretch occupies residues 14 to 49; that stretch reads AIDITAPESTIPNKSKVPNKSAESSQSTVPKAPSRR. The segment covering 20–42 has biased composition (polar residues); the sequence is PESTIPNKSKVPNKSAESSQSTV. Substrate-binding positions include asparagine 283, methionine 312, tyrosine 341, histidine 377, 397–399, 438–441, and glutamate 477; these read SRG and DGMR. Residue histidine 481 participates in Zn(2+) binding. Tyrosine 504 serves as a coordination point for substrate. Histidine 545 is a Zn(2+) binding site. [4Fe-4S] cluster is bound by residues cysteine 625, cysteine 628, and cysteine 633.

The protein belongs to the ThiC family. In terms of assembly, homodimer. [4Fe-4S] cluster serves as cofactor.

It catalyses the reaction 5-amino-1-(5-phospho-beta-D-ribosyl)imidazole + S-adenosyl-L-methionine = 4-amino-2-methyl-5-(phosphooxymethyl)pyrimidine + CO + 5'-deoxyadenosine + formate + L-methionine + 3 H(+). It functions in the pathway cofactor biosynthesis; thiamine diphosphate biosynthesis. Its function is as follows. Catalyzes the synthesis of the hydroxymethylpyrimidine phosphate (HMP-P) moiety of thiamine from aminoimidazole ribotide (AIR) in a radical S-adenosyl-L-methionine (SAM)-dependent reaction. This Shewanella putrefaciens (strain CN-32 / ATCC BAA-453) protein is Phosphomethylpyrimidine synthase.